The chain runs to 661 residues: Sperm transmembrane protein 9 (661 aa).

An N-terminal signal peptide occupies residues 1 to 16; it reads MNVILVLVVLFFAGDC. Residues 17–618 are Extracellular-facing; it reads AKIRKIIDFL…MTNRLMKNYE (602 aa). Positions 52-90 constitute an EGF-like 1 domain; sequence NFNPCLENPKICSNRGKCLHENGNFYCICPVTHYGKTCE. 3 disulfide bridges follow: Cys56–Cys69, Cys63–Cys78, and Cys80–Cys89. 4 N-linked (GlcNAc...) asparagine glycosylation sites follow: Asn105, Asn106, Asn134, and Asn190. Residues 210–259 enclose the EGF-like 2 domain; the sequence is QISACFDTQCDNGGICEDVVDWKTKTVTATCKCPSAIELIGGTVTGENCE. Intrachain disulfides connect Cys214–Cys225, Cys219–Cys240, and Cys242–Cys258. N-linked (GlcNAc...) asparagine glycans are attached at residues Asn279, Asn290, Asn316, and Asn338. A Cell attachment site motif is present at residues 377 to 379; that stretch reads RGD. EGF-like domains follow at residues 377 to 414, 519 to 557, and 559 to 600; these read RGDR…EKCE, HTNP…SLCE, and VDDS…LDCN. Disulfide bonds link Cys385–Cys402, Cys393–Cys404, Cys413–Cys419, Cys523–Cys534, Cys528–Cys545, Cys547–Cys556, Cys563–Cys576, Cys571–Cys588, and Cys590–Cys599. N-linked (GlcNAc...) asparagine glycosylation is present at Asn549. A helical transmembrane segment spans residues 619-639; the sequence is FSLPLVACFVSLAILLPVIVI. At 640 to 661 the chain is on the cytoplasmic side; sequence SRRRQGRVEEAKKTSEVKTENP.

Expressed in spermatids, during spermogenesis expression is primarily localized to the pseudopod.

It is found in the cytoplasm. The protein resides in the membrane. In terms of biological role, required for fertilization. May be required for cell adhesion and/or function as a signaling molecule. This Caenorhabditis elegans protein is Sperm transmembrane protein 9 (spe-9).